Here is a 469-residue protein sequence, read N- to C-terminus: Acetyl-CoA decarbonylase/synthase complex subunit beta 1 (469 aa).

[Ni-Fe-S] cluster-binding residues include Cys189, Cys192, Cys278, and Cys280.

This sequence belongs to the CdhC family. In terms of assembly, monomer. The ACDS complex is made up of alpha, epsilon, beta, gamma and delta chains with a probable stoichiometry of (alpha(2)epsilon(2))(4)-beta(8)-(gamma(1)delta(1))(8) (Potential). Requires [Ni-Fe-S] cluster as cofactor.

It carries out the reaction Co(I)-[corrinoid Fe-S protein] + acetyl-CoA + H(+) = methyl-Co(III)-[corrinoid Fe-S protein] + CO + CoA. It functions in the pathway one-carbon metabolism; methanogenesis from acetate. Part of a complex that catalyzes the reversible cleavage of acetyl-CoA, allowing growth on acetate as sole source of carbon and energy. The alpha-epsilon complex generates CO from CO(2), while the beta subunit (this protein) combines the CO with CoA and a methyl group to form acetyl-CoA. The methyl group, which is incorporated into acetyl-CoA, is transferred to the beta subunit by a corrinoid iron-sulfur protein (the gamma-delta complex). This is Acetyl-CoA decarbonylase/synthase complex subunit beta 1 (cdhC1) from Methanosarcina thermophila.